Consider the following 217-residue polypeptide: Neuron-specific vesicular protein calcyon (217 aa).

Positions 1 to 25 are disordered; it reads MVKLGCSFSGKPGKDPGDQDGAAMD. Residues 1 to 87 lie on the Extracellular side of the membrane; sequence MVKLGCSFSG…EEGRRLPTAR (87 aa). N-linked (GlcNAc...) asparagine glycosylation is present at N73. Residues 88 to 108 form a helical membrane-spanning segment; that stretch reads MIAFAMALLGCVLIMYKAIWY. Residues 109 to 217 are Cytoplasmic-facing; that stretch reads DQFTCPDGFL…AGSAAPPPAQ (109 aa). Residues 162–217 form a disordered region; it reads PAAWGDGYRAAKEERKGPTQAGAAAAATEPPGKPSAKAEKEAARKAAGSAAPPPAQ.

This sequence belongs to the NSG family. Interacts with CLTA. Post-translationally, glycosylated. Expressed in the pyramidal cells of the prefrontal cortex, in hypothalamus and in caudate nucleus. No expression in spleen. Up-regulated in the prefrontal cortex of schizophrenic patients with nearly twice the levels of non-schizophrenics.

It localises to the cytoplasmic vesicle membrane. It is found in the cell membrane. Interacts with clathrin light chain A and stimulates clathrin self-assembly and clathrin-mediated endocytosis. This Homo sapiens (Human) protein is Neuron-specific vesicular protein calcyon (CALY).